A 224-amino-acid polypeptide reads, in one-letter code: Holliday junction branch migration complex subunit RuvA (224 aa).

Positions 1 to 67 are domain I; that stretch reads MISWLKGEKV…EDGTSLYGFI (67 aa). The tract at residues 68 to 146 is domain II; that stretch reads EVNQRDLFRE…RFTDNDKTIH (79 aa). The segment at 147-157 is flexible linker; sequence ENKNDIEANQF. The tract at residues 157–224 is domain III; the sequence is FSKYIDEIYL…ILMKLSEKST (68 aa).

It belongs to the RuvA family. As to quaternary structure, homotetramer. Forms an RuvA(8)-RuvB(12)-Holliday junction (HJ) complex. HJ DNA is sandwiched between 2 RuvA tetramers; dsDNA enters through RuvA and exits via RuvB. An RuvB hexamer assembles on each DNA strand where it exits the tetramer. Each RuvB hexamer is contacted by two RuvA subunits (via domain III) on 2 adjacent RuvB subunits; this complex drives branch migration. In the full resolvosome a probable DNA-RuvA(4)-RuvB(12)-RuvC(2) complex forms which resolves the HJ.

Its subcellular location is the cytoplasm. In terms of biological role, the RuvA-RuvB-RuvC complex processes Holliday junction (HJ) DNA during genetic recombination and DNA repair, while the RuvA-RuvB complex plays an important role in the rescue of blocked DNA replication forks via replication fork reversal (RFR). RuvA specifically binds to HJ cruciform DNA, conferring on it an open structure. The RuvB hexamer acts as an ATP-dependent pump, pulling dsDNA into and through the RuvAB complex. HJ branch migration allows RuvC to scan DNA until it finds its consensus sequence, where it cleaves and resolves the cruciform DNA. The protein is Holliday junction branch migration complex subunit RuvA of Prochlorococcus marinus (strain NATL2A).